We begin with the raw amino-acid sequence, 187 residues long: Large ribosomal subunit protein uL5 (187 aa).

Belongs to the universal ribosomal protein uL5 family. In terms of assembly, part of the 50S ribosomal subunit; part of the 5S rRNA/L5/L18/L25 subcomplex. Contacts the 5S rRNA and the P site tRNA. Forms a bridge to the 30S subunit in the 70S ribosome.

Its function is as follows. This is one of the proteins that bind and probably mediate the attachment of the 5S RNA into the large ribosomal subunit, where it forms part of the central protuberance. In the 70S ribosome it contacts protein S13 of the 30S subunit (bridge B1b), connecting the 2 subunits; this bridge is implicated in subunit movement. Contacts the P site tRNA; the 5S rRNA and some of its associated proteins might help stabilize positioning of ribosome-bound tRNAs. This chain is Large ribosomal subunit protein uL5, found in Roseobacter denitrificans (strain ATCC 33942 / OCh 114) (Erythrobacter sp. (strain OCh 114)).